The chain runs to 178 residues: Mediator of RNA polymerase II transcription subunit 31 (178 aa).

Residues 129–140 (EGQELEESEDEA) are compositionally biased toward acidic residues. The tract at residues 129 to 178 (EGQELEESEDEADIRQKDTEDEDDEETMKKPDADTAEKNSTTSTVSKKEK) is disordered. A compositionally biased stretch (basic and acidic residues) spans 155–165 (TMKKPDADTAE). Polar residues predominate over residues 166–178 (KNSTTSTVSKKEK).

Belongs to the Mediator complex subunit 31 family. As to quaternary structure, component of the Mediator complex.

The protein localises to the nucleus. Its function is as follows. Component of the Mediator complex, a coactivator involved in the regulated transcription of nearly all RNA polymerase II-dependent genes. Mediator functions as a bridge to convey information from gene-specific regulatory proteins to the basal RNA polymerase II transcription machinery. Mediator is recruited to promoters by direct interactions with regulatory proteins and serves as a scaffold for the assembly of a functional preinitiation complex with RNA polymerase II and the general transcription factors. The protein is Mediator of RNA polymerase II transcription subunit 31 of Caenorhabditis elegans.